A 70-amino-acid chain; its full sequence is Gas vesicle protein A (70 aa).

The protein belongs to the gas vesicle GvpA family. In terms of assembly, the gas vesicle shell is 2 nm thick and consists of a single layer of this protein. It forms helical ribs nearly perpendicular to the long axis of the vesicle.

It localises to the gas vesicle shell. Its function is as follows. Gas vesicles are hollow, gas filled proteinaceous nanostructures found in some microorganisms. During planktonic growth they allow positioning of the organism at a favorable depth for light or nutrient acquisition. GvpA forms the protein shell. The sequence is that of Gas vesicle protein A from Cereibacter sphaeroides (strain ATCC 17023 / DSM 158 / JCM 6121 / CCUG 31486 / LMG 2827 / NBRC 12203 / NCIMB 8253 / ATH 2.4.1.) (Rhodobacter sphaeroides).